Here is an 856-residue protein sequence, read N- to C-terminus: Leucine--tRNA ligase (856 aa).

A 'HIGH' region motif is present at residues 53–63 (PYPSGNLHMGH). Residues 622–626 (KMSKS) carry the 'KMSKS' region motif. Lys-625 provides a ligand contact to ATP.

It belongs to the class-I aminoacyl-tRNA synthetase family.

Its subcellular location is the cytoplasm. It carries out the reaction tRNA(Leu) + L-leucine + ATP = L-leucyl-tRNA(Leu) + AMP + diphosphate. The chain is Leucine--tRNA ligase from Prochlorococcus marinus (strain MIT 9312).